The following is a 153-amino-acid chain: Pheromone-binding protein Gp-9 (153 aa).

The first 19 residues, 1–19 (MKTFVLHIFIFALVAFASA), serve as a signal peptide directing secretion. Disulfide bonds link cysteine 37–cysteine 77, cysteine 73–cysteine 129, and cysteine 118–cysteine 138.

The protein belongs to the PBP/GOBP family. As to quaternary structure, homodimer.

The protein resides in the secreted. Functionally, colony queen number, a major feature of social organization, is associated with worker genotype for Gp-9. Colonies are headed by either a single reproductive queen (monogyne form) or multiple queens (polygyne form). Differences in worker Gp-9 genotypes between social forms may cause differences in workers' abilities to recognize queens and regulate their numbers. In Solenopsis saevissima (Fire ant), this protein is Pheromone-binding protein Gp-9.